The primary structure comprises 350 residues: Putative deoxyribonuclease-2 (350 aa).

It belongs to the DNase II family.

The polypeptide is Putative deoxyribonuclease-2 (Burkholderia pseudomallei (strain 1710b)).